A 142-amino-acid chain; its full sequence is MKHKIKKRKLSRCTEHRLSMLKNLSISLINHEQIITTLPKAKELRPYVEKFITIAKNKNTLHGRRLLLSRLHNNKLVVDKLLNVLASRYQGCKGGYSRVMKFSTRKGDCASMAVIELVNRDVTAKGKVCDKNKEKNEVATKS.

This sequence belongs to the bacterial ribosomal protein bL17 family. Part of the 50S ribosomal subunit. Contacts protein L32.

The polypeptide is Large ribosomal subunit protein bL17 (Wolbachia sp. subsp. Brugia malayi (strain TRS)).